Here is a 124-residue protein sequence, read N- to C-terminus: Putative melanoma-associated antigen 5P (124 aa).

Basic and acidic residues predominate over residues Met-1–Glu-14. Disordered stretches follow at residues Met-1–Ser-69 and Gln-82–Ser-103. The MAGE domain maps to Leu-3–Tyr-124. Polar residues-rich tracts occupy residues Ala-30 to Pro-44 and Gln-82 to Asp-100.

As to expression, expressed in many tumors of several types, such as melanoma, head and neck squamous cell carcinoma, lung carcinoma and breast carcinoma, but not in normal tissues except for testes.

In terms of biological role, may negatively regulates apoptosis. This Homo sapiens (Human) protein is Putative melanoma-associated antigen 5P.